A 117-amino-acid polypeptide reads, in one-letter code: Flagellar transcriptional regulator FlhD (117 aa).

This sequence belongs to the FlhD family. In terms of assembly, homodimer; disulfide-linked. Forms a heterohexamer composed of two FlhC and four FlhD subunits. Each FlhC binds a FlhD dimer, forming a heterotrimer, and a hexamer assembles by dimerization of two heterotrimers.

The protein resides in the cytoplasm. In terms of biological role, functions in complex with FlhC as a master transcriptional regulator that regulates transcription of several flagellar and non-flagellar operons by binding to their promoter region. Activates expression of class 2 flagellar genes, including fliA, which is a flagellum-specific sigma factor that turns on the class 3 genes. Also regulates genes whose products function in a variety of physiological pathways. The chain is Flagellar transcriptional regulator FlhD from Erwinia amylovora (strain CFBP1430).